Reading from the N-terminus, the 200-residue chain is MASKIETLKANLEAALGARVVSLTEAIGELTLVVKASDYLEVAKTLRDDPKLRFEQLIDLCGVDYQTFGDGAYDGPRFAAVSHLLSVTNNWRLRLRAFAPDDDLPIVASLVDIWTSANWYEREAFDLYGIVFEGHPDLRRILTDYGFIGHPFRKDFPVSGYVEMRYDPEEKRVVYQPVTIEPREITPRVIREDRYGGLKH.

Belongs to the complex I 30 kDa subunit family. As to quaternary structure, NDH-1 is composed of 14 different subunits. Subunits NuoB, C, D, E, F, and G constitute the peripheral sector of the complex.

It is found in the cell inner membrane. It carries out the reaction a quinone + NADH + 5 H(+)(in) = a quinol + NAD(+) + 4 H(+)(out). Functionally, NDH-1 shuttles electrons from NADH, via FMN and iron-sulfur (Fe-S) centers, to quinones in the respiratory chain. The immediate electron acceptor for the enzyme in this species is believed to be ubiquinone. Couples the redox reaction to proton translocation (for every two electrons transferred, four hydrogen ions are translocated across the cytoplasmic membrane), and thus conserves the redox energy in a proton gradient. The sequence is that of NADH-quinone oxidoreductase subunit C from Burkholderia cenocepacia (strain HI2424).